The chain runs to 119 residues: Large ribosomal subunit protein bL20 (119 aa).

It belongs to the bacterial ribosomal protein bL20 family.

Binds directly to 23S ribosomal RNA and is necessary for the in vitro assembly process of the 50S ribosomal subunit. It is not involved in the protein synthesizing functions of that subunit. The polypeptide is Large ribosomal subunit protein bL20 (Dichelobacter nodosus (strain VCS1703A)).